The chain runs to 397 residues: 3-hydroxybenzoate 6-hydroxylase (397 aa).

Belongs to the 3-hydroxybenzoate 6-hydroxylase family. In terms of assembly, monomer. FAD is required as a cofactor.

The enzyme catalyses 3-hydroxybenzoate + NADH + O2 + H(+) = 2,5-dihydroxybenzoate + NAD(+) + H2O. With respect to regulation, inhibited by copper, mercury and iron ions. Functionally, catalyzes the NAD- or NADP-dependent conversion of 3-hydroxybenzoate to gentisate. NAD and NADP function equally well. In Klebsiella oxytoca, this protein is 3-hydroxybenzoate 6-hydroxylase (mhbM).